The chain runs to 654 residues: Protein SERAC1 (654 aa).

A helical membrane pass occupies residues 32-54 (NIIKFTGSLILGGSLFLTYEVLA).

The protein belongs to the SERAC1 family. As to expression, widely expressed, with predominant expression in skeletal muscle and brain. In the brain, highest levels are found in the frontal and occipital cortices, cerebellum and hippocampus.

The protein localises to the mitochondrion membrane. It localises to the endoplasmic reticulum. It is found in the mitochondrion. Its function is as follows. Facilitates the transport of serine from the cytosol to the mitochondria by interacting with and stabilizing Sideroflexin-1 (SFXN1), a mitochondrial serine transporter, playing a fundamental role in the one-carbon cycle responsible for the synthesis of nucleotides needed for mitochondrial DNA replication. Plays an important role in the phosphatidylglycerol (PG) remodeling that is essential for both mitochondrial function and intracellular cholesterol trafficking. Specifically involved in the exchange of the sn-1 acyl chain from PG 16:0/18:1(9Z) (also known as 1-hexadecanoyl-2-(9Z-octadecenoyl)-sn-glycero-3-phospho-(1'-sn-glycerol)) to PG 18:0/18:1(9Z) (also known as 1-octadecanoyl-2-(9Z-octadecenoyl)-sn-glycero-3-phospho-(1'-sn-glycerol)), a step needed in the bis(monoacylglycerol)phosphate biosynthetic pathway. May have acyltransferase activity although the mechanism for PG remodeling has not been determined. The sequence is that of Protein SERAC1 (SERAC1) from Homo sapiens (Human).